Here is a 132-residue protein sequence, read N- to C-terminus: Antileukoproteinase (132 aa).

A signal peptide spans 1–25 (MKSSGLFPFLVLLALGTLAPWAVEG). 2 consecutive WAP domains span residues 28–76 (KSFK…LDPV) and 82–130 (TRRK…VSPV). Cystine bridges form between cysteine 35-cysteine 64, cysteine 43-cysteine 68, cysteine 51-cysteine 63, cysteine 57-cysteine 72, cysteine 89-cysteine 118, cysteine 96-cysteine 122, cysteine 105-cysteine 117, and cysteine 111-cysteine 126. The segment at 84–132 (RKPGKCPVTYGQCLMLNPPNFCEMDGQCKRDLKCCMGMCGKSCVSPVKA) is elastase inhibitory domain.

In terms of assembly, interacts with GRN; interaction protects progranulin from proteolysis. In terms of tissue distribution, detected in blood plasma. Detected in bone marrow myeloid cells. Detected in airway sputum. Detected in parotid gland secretions. Detected in seminal plasma (at protein level). Detected in uterus cervix.

Its subcellular location is the secreted. Acid-stable proteinase inhibitor with strong affinities for trypsin, chymotrypsin, elastase, and cathepsin G. Modulates the inflammatory and immune responses after bacterial infection, and after infection by the intracellular parasite L.major. Down-regulates responses to bacterial lipopolysaccharide (LPS). Plays a role in regulating the activation of NF-kappa-B and inflammatory responses. Has antimicrobial activity against mycobacteria, but not against salmonella. Contributes to normal resistance against infection by M.tuberculosis. Required for normal resistance to infection by L.major. Required for normal wound healing, probably by preventing tissue damage by limiting protease activity. Together with ELANE, required for normal differentiation and proliferation of bone marrow myeloid cells. The protein is Antileukoproteinase (SLPI) of Homo sapiens (Human).